The sequence spans 228 residues: 7-cyano-7-deazaguanine synthase (228 aa).

8–18 (LSGGMDSATTL) is an ATP binding site. Residues Cys188, Cys198, Cys201, and Cys204 each coordinate Zn(2+).

It belongs to the QueC family. The cofactor is Zn(2+).

It carries out the reaction 7-carboxy-7-deazaguanine + NH4(+) + ATP = 7-cyano-7-deazaguanine + ADP + phosphate + H2O + H(+). Its pathway is purine metabolism; 7-cyano-7-deazaguanine biosynthesis. Catalyzes the ATP-dependent conversion of 7-carboxy-7-deazaguanine (CDG) to 7-cyano-7-deazaguanine (preQ(0)). This Nitrosomonas europaea (strain ATCC 19718 / CIP 103999 / KCTC 2705 / NBRC 14298) protein is 7-cyano-7-deazaguanine synthase.